The chain runs to 74 residues: Protein YkgV (74 aa).

The polypeptide is Protein YkgV (Escherichia coli (strain K12)).